A 274-amino-acid chain; its full sequence is MNADRTLSDEQYDWIVAYERHITPHAVLSVRTPAYGRMPPLQIPTFTGPTPTYFVYDGNVEEVSGQLIKDPSDDTLPHHYAATWTCSLFTSRPPSDPAWPRDSVMQYDSNWSPYHRVPMRYFPSFMTLDSDLLGPNDGFWPLLHRCAGFRLRSPWRFPLDVLAAGIGTTVSTIRSLEKAGALNTVEGLLRALGWKYHHLSGLRPQHVEYCMSVWSLSFTRADLDVIDPASWFDGLLRSPIYPDEAPIGLNCEQITTHPFVLLNWIRVQLMDDGC.

This sequence belongs to the aquareoviridae NS4 protein family.

This is Non-structural protein 4 (S7) from Notemigonus crysoleucas (Golden shiner).